The sequence spans 253 residues: uncharacterized protein (253 aa).

NADP(+) is bound by residues isoleucine 17, serine 36, aspartate 62, asparagine 89, tyrosine 158, lysine 162, valine 191, and threonine 193. Tyrosine 158 acts as the Proton donor in catalysis. Lysine 162 acts as the Lowers pKa of active site Tyr in catalysis.

It belongs to the short-chain dehydrogenases/reductases (SDR) family.

It localises to the cytoplasm. The protein resides in the nucleus. This is an uncharacterized protein from Schizosaccharomyces pombe (strain 972 / ATCC 24843) (Fission yeast).